Reading from the N-terminus, the 131-residue chain is Small ribosomal subunit protein uS8 (131 aa).

This sequence belongs to the universal ribosomal protein uS8 family. Part of the 30S ribosomal subunit. Contacts proteins S5 and S12.

In terms of biological role, one of the primary rRNA binding proteins, it binds directly to 16S rRNA central domain where it helps coordinate assembly of the platform of the 30S subunit. The sequence is that of Small ribosomal subunit protein uS8 from Azoarcus sp. (strain BH72).